Reading from the N-terminus, the 283-residue chain is Gap junction beta-1 protein (283 aa).

At methionine 1–arginine 22 the chain is on the cytoplasmic side. Residues valine 23 to glycine 45 form a helical membrane-spanning segment. The Extracellular portion of the chain corresponds to aspartate 46–arginine 75. Residues leucine 76–valine 95 form a helical membrane-spanning segment. The Cytoplasmic segment spans residues alanine 96 to threonine 130. A helical transmembrane segment spans residues leucine 131–phenylalanine 153. Over tyrosine 154–threonine 191 the chain is Extracellular. The helical transmembrane segment at valine 192 to isoleucine 214 threads the bilayer. Residues arginine 215–cysteine 283 are Cytoplasmic-facing. Phosphoserine is present on residues serine 233, serine 258, serine 266, and serine 277.

Belongs to the connexin family. Beta-type (group I) subfamily. In terms of assembly, a connexon is composed of a hexamer of connexins. Interacts with CNST.

The protein localises to the cell membrane. It is found in the cell junction. Its subcellular location is the gap junction. Functionally, one gap junction consists of a cluster of closely packed pairs of transmembrane channels, the connexons, through which materials of low MW diffuse from one cell to a neighboring cell. The polypeptide is Gap junction beta-1 protein (GJB1) (Macaca fascicularis (Crab-eating macaque)).